A 298-amino-acid chain; its full sequence is ADP/ATP translocase 2 (298 aa).

N-acetylmethionine is present on M1. At 1–7 the chain is on the mitochondrial intermembrane side; the sequence is MTDAAVS. The residue at position 2 (T2) is an N-acetylthreonine; in ADP/ATP translocase 2, N-terminally processed. A Solcar 1 repeat occupies 6–98; that stretch reads VSFAKDFLAG…FAFKDKYKQI (93 aa). S7 is subject to Phosphoserine. Residues 8–37 form a helical membrane-spanning segment; sequence FAKDFLAGGVAAAISKTAVAPIERVKLLLQ. K23 bears the N6-malonyllysine mark. The Mitochondrial matrix segment spans residues 38 to 74; it reads VQHASKQITADKQYKGIIDCVVRIPKEQGVLSFWRGN. K43 bears the N6-succinyllysine mark. K52 carries the N6,N6,N6-trimethyllysine; alternate modification. N6,N6-dimethyllysine; alternate is present on K52. K52 carries the post-translational modification N6-methyllysine; alternate. Residues 75–99 form a helical membrane-spanning segment; sequence LANVIRYFPTQALNFAFKDKYKQIF. 2 residues coordinate ADP: R80 and K92. N6-malonyllysine occurs at positions 92 and 96. Over 100–109 the chain is Mitochondrial intermembrane; that stretch reads LGGVDKRTQF. The residue at position 105 (K105) is an N6-acetyllysine; alternate. K105 bears the N6-succinyllysine; alternate mark. The chain crosses the membrane as a helical span at residues 110-130; that stretch reads WRYFAGNLASGGAAGATSLCF. Solcar repeat units follow at residues 111–201 and 212–297; these read RYFA…AKGM and ISWM…IKKY. The Mitochondrial matrix segment spans residues 131 to 178; sequence VYPLDFARTRLAADVGKAGAEREFKGLGDCLVKIYKSDGIKGLYQGFN. Position 147 is an N6-methyllysine; alternate (K147). 2 positions are modified to N6-acetyllysine; alternate: K147 and K155. N6-succinyllysine; alternate occurs at positions 147 and 155. Residue K147 is modified to N6-malonyllysine; alternate. N6-acetyllysine is present on residues K163 and K166. A helical transmembrane segment spans residues 179-199; it reads VSVQGIIIYRAAYFGIYDTAK. Residues 200–210 lie on the Mitochondrial intermembrane side of the membrane; the sequence is GMLPDPKNTHI. A helical transmembrane segment spans residues 211–231; it reads FISWMIAQSVTAVAGLTSYPF. At 232–273 the chain is on the mitochondrial matrix side; sequence DTVRRRMMMQSGRKGTDIMYTGTLDCWRKIARDEGGKAFFKG. R235 is a binding site for ADP. Positions 235–240 are important for transport activity; it reads RRRMMM. The short motif at 235–240 is the Nucleotide carrier signature motif element; sequence RRRMMM. Position 268 is an N6-acetyllysine; alternate (K268). K268 is subject to N6-succinyllysine; alternate. Residues 274–291 traverse the membrane as a helical segment; the sequence is AWSNVLRGMGGAFVLVLY. Residues 292 to 298 are Mitochondrial intermembrane-facing; that stretch reads DEIKKYT.

The protein belongs to the mitochondrial carrier (TC 2.A.29) family. As to quaternary structure, monomer. Component of the MMXD complex, which includes CIAO1, ERCC2, CIAO2B, MMS19 and SLC25A5/ANT2. Interacts with AK4. Interacts with TIMM44; leading to inhibit the presequence translocase TIMM23, thereby promoting stabilization of PINK1. Post-translationally, trimethylated by ANTKMT at Lys-52. As to expression, present in kidney, brain, heart, liver and skeletal muscle.

It localises to the mitochondrion inner membrane. Its subcellular location is the membrane. The catalysed reaction is ADP(in) + ATP(out) = ADP(out) + ATP(in). It catalyses the reaction H(+)(in) = H(+)(out). The matrix-open state (m-state) is inhibited by the membrane-permeable bongkrekic acid (BKA). The cytoplasmic-open state (c-state) is inhibited by the membrane-impermeable toxic inhibitor carboxyatractyloside (CATR). Proton transporter activity is inhibited by ADP:ATP antiporter activity. Its function is as follows. ADP:ATP antiporter that mediates import of ADP into the mitochondrial matrix for ATP synthesis, and export of ATP out to fuel the cell. Cycles between the cytoplasmic-open state (c-state) and the matrix-open state (m-state): operates by the alternating access mechanism with a single substrate-binding site intermittently exposed to either the cytosolic (c-state) or matrix (m-state) side of the inner mitochondrial membrane. In addition to its ADP:ATP antiporter activity, also involved in mitochondrial uncoupling and mitochondrial permeability transition pore (mPTP) activity. Plays a role in mitochondrial uncoupling by acting as a proton transporter: proton transport uncouples the proton flows via the electron transport chain and ATP synthase to reduce the efficiency of ATP production and cause mitochondrial thermogenesis. Proton transporter activity is inhibited by ADP:ATP antiporter activity, suggesting that SLC25A5/ANT2 acts as a master regulator of mitochondrial energy output by maintaining a delicate balance between ATP production (ADP:ATP antiporter activity) and thermogenesis (proton transporter activity). Proton transporter activity requires free fatty acids as cofactor, but does not transport it. Probably mediates mitochondrial uncoupling in tissues that do not express UCP1. Also plays a key role in mPTP opening, a non-specific pore that enables free passage of the mitochondrial membranes to solutes of up to 1.5 kDa, and which contributes to cell death. It is however unclear if SLC25A5/ANT2 constitutes a pore-forming component of mPTP or regulates it. Acts as a regulator of mitophagy independently of ADP:ATP antiporter activity: promotes mitophagy via interaction with TIMM44, leading to inhibit the presequence translocase TIMM23, thereby promoting stabilization of PINK1. As part of the mitotic spindle-associated MMXD complex it may play a role in chromosome segregation. This chain is ADP/ATP translocase 2, found in Rattus norvegicus (Rat).